The chain runs to 533 residues: Probable DNA ligase (533 aa).

Glutamate 211 is a binding site for ATP. Residue lysine 213 is the N6-AMP-lysine intermediate of the active site. Residues arginine 218, arginine 233, glutamate 262, phenylalanine 302, arginine 374, and lysine 380 each contribute to the ATP site. A disordered region spans residues 512-533; sequence LAGEAAEKGQAEGGGEELEDDG.

Belongs to the ATP-dependent DNA ligase family. The cofactor is Mg(2+).

The catalysed reaction is ATP + (deoxyribonucleotide)n-3'-hydroxyl + 5'-phospho-(deoxyribonucleotide)m = (deoxyribonucleotide)n+m + AMP + diphosphate.. Functionally, DNA ligase that seals nicks in double-stranded DNA during DNA replication, DNA recombination and DNA repair. The polypeptide is Probable DNA ligase (Sorangium cellulosum (strain So ce56) (Polyangium cellulosum (strain So ce56))).